Here is a 230-residue protein sequence, read N- to C-terminus: Demethylmenaquinone methyltransferase (230 aa).

Residues threonine 62, aspartate 80, aspartate 100–glycine 101, and serine 117 contribute to the S-adenosyl-L-methionine site.

It belongs to the class I-like SAM-binding methyltransferase superfamily. MenG/UbiE family.

It carries out the reaction a 2-demethylmenaquinol + S-adenosyl-L-methionine = a menaquinol + S-adenosyl-L-homocysteine + H(+). The protein operates within quinol/quinone metabolism; menaquinone biosynthesis; menaquinol from 1,4-dihydroxy-2-naphthoate: step 2/2. Its function is as follows. Methyltransferase required for the conversion of demethylmenaquinol (DMKH2) to menaquinol (MKH2). The protein is Demethylmenaquinone methyltransferase of Corynebacterium efficiens (strain DSM 44549 / YS-314 / AJ 12310 / JCM 11189 / NBRC 100395).